Here is an 853-residue protein sequence, read N- to C-terminus: Aminotransferase PigE (853 aa).

503–504 (GT) contacts pyridoxal 5'-phosphate. At Lys-645 the chain carries N6-(pyridoxal phosphate)lysine. Thr-680 provides a ligand contact to pyridoxal 5'-phosphate.

It belongs to the class-III pyridoxal-phosphate-dependent aminotransferase family. Homodimer. Pyridoxal 5'-phosphate serves as cofactor.

Its pathway is antibiotic biosynthesis; prodigiosin biosynthesis. Its function is as follows. Involved in the biosynthesis of 2-methyl-3-n-amyl-pyrrole (MAP), one of the terminal products involved in the biosynthesis of the red antibiotic prodigiosin (Pig). Catalyzes the transamination to the aldehyde group of 3-acetyloctanal, resulting in an aminoketone, which spontaneously cyclizes to yield the dihydro form of MAP (H2MAP). The sequence is that of Aminotransferase PigE from Serratia sp. (strain ATCC 39006) (Prodigiosinella confusarubida).